We begin with the raw amino-acid sequence, 753 residues long: Polyadenylate-binding protein, cytoplasmic and nuclear (753 aa).

Low complexity predominate over residues 1-43 (MSAEASTTPAAETPVNGTPETSTTPAAPAAEATAAETAAPSTS). The interval 1-49 (MSAEASTTPAAETPVNGTPETSTTPAAPAAEATAAETAAPSTSQPHSAS) is disordered. RRM domains are found at residues 48–126 (ASLY…WSQR), 136–213 (GNVF…HHIS), 229–306 (TNVY…RAQK), and 332–460 (VNLY…LAQR). Disordered regions lie at residues 363 to 417 (VMRD…SDKK), 607 to 649 (RGPG…PAAG), and 727 to 753 (GTEG…ENKS). A compositionally biased stretch (basic and acidic residues) spans 376–417 (DSDKEKKEESKEEKPEAAEKTEEAAKESGDDQDKENKKSDKK). Residues 607–619 (RGPGYGQGRGGVP) show a composition bias toward gly residues. Over residues 633 to 649 (QNAQPAAGRGEEAPAAG) the composition is skewed to low complexity. Residues 647-724 (AAGLTAQSLA…ALSVYDEYMK (78 aa)) enclose the PABC domain. Residues 737 to 753 (PKPKEAATEESTEENKS) show a composition bias toward basic and acidic residues.

The protein belongs to the polyadenylate-binding protein type-1 family.

It localises to the cytoplasm. Its subcellular location is the nucleus. Functionally, binds the poly(A) tail of mRNA. Appears to be an important mediator of the multiple roles of the poly(A) tail in mRNA biogenesis, stability and translation. In the nucleus, involved in both mRNA cleavage and polyadenylation. Is also required for efficient mRNA export to the cytoplasm. Acts in concert with a poly(A)-specific nuclease (PAN) to affect poly(A) tail shortening, which may occur concomitantly with either nucleocytoplasmic mRNA transport or translational initiation. In the cytoplasm, stimulates translation initiation and regulates mRNA decay through translation termination-coupled poly(A) shortening, probably mediated by PAN. This Aspergillus terreus (strain NIH 2624 / FGSC A1156) protein is Polyadenylate-binding protein, cytoplasmic and nuclear (pab1).